The following is a 366-amino-acid chain: Growth hormone secretagogue receptor type 1 (366 aa).

Topologically, residues 1-40 (MWNATPSEEPGPNLTLPDLGWDAPPENDSLVEELLPLFPT) are extracellular. Asn-13 and Asn-27 each carry an N-linked (GlcNAc...) asparagine glycan. Residues 41–66 (PLLAGVTATCVALFVVGIAGNLLTML) form a helical membrane-spanning segment. At 67–72 (VVSRFR) the chain is on the cytoplasmic side. The chain crosses the membrane as a helical span at residues 73–96 (EMRTTTNLYLSSMAFSDLLIFLCM). The Extracellular segment spans residues 97–117 (PLDLFRLWQYRPWNLGNLLCK). A disulfide bond links Cys-116 and Cys-198. The chain crosses the membrane as a helical span at residues 118–139 (LFQFVSESCTYATVLTITALSV). Over 140 to 162 (ERYFAICFPLRAKVVVTKGRVKL) the chain is Cytoplasmic. The chain crosses the membrane as a helical span at residues 163–183 (VILVIWAVAFCSAGPIFVLVG). Residues 184–211 (VEHDNGTDPRDTNECRATEFAVRSGLLT) are Extracellular-facing. The helical transmembrane segment at 212-235 (VMVWVSSVFFFLPVFCLTVLYSLI) threads the bilayer. Over 236-263 (GRKLWRRKRGEAAVGSSLRDQNHKQTVK) the chain is Cytoplasmic. A helical transmembrane segment spans residues 264 to 285 (MLAVVVFAFILCWLPFHVGRYL). Over 286–302 (FSKSLEPGSVEIAQISQ) the chain is Extracellular. Residues 303 to 326 (YCNLVSFVLFYLSAAINPILYNIM) traverse the membrane as a helical segment. Residues 327–366 (SKKYRVAVFKLLGFEPFSQRKLSTLKDESSRAWTESSINT) are Cytoplasmic-facing.

This sequence belongs to the G-protein coupled receptor 1 family. In terms of tissue distribution, pituitary and hypothalamus.

Its subcellular location is the cell membrane. Receptor for ghrelin, coupled to G-alpha-11 proteins. Stimulates growth hormone secretion. Also binds other growth hormone releasing peptides (GHRP) (e.g. Met-enkephalin and GHRP-6) as well as non-peptide, low molecular weight secretagogues (e.g. L-692,429, MK-0677, adenosine). The chain is Growth hormone secretagogue receptor type 1 (GHSR) from Sus scrofa (Pig).